We begin with the raw amino-acid sequence, 206 residues long: Large ribosomal subunit protein uL13x (206 aa).

It belongs to the universal ribosomal protein uL13 family.

The sequence is that of Large ribosomal subunit protein uL13x (RPL13AC) from Arabidopsis thaliana (Mouse-ear cress).